We begin with the raw amino-acid sequence, 166 residues long: Phospholipase A2 inhibitor B1 (166 aa).

An N-terminal signal peptide occupies residues 1–19; sequence MRLILLSGLLLLGTFLVNG. The 116-residue stretch at 46–161 folds into the C-type lectin domain; it reads LFHAFLTVHK…CDDNLLVVCE (116 aa). Intrachain disulfides connect cysteine 83/cysteine 160 and cysteine 138/cysteine 152. A glycan (N-linked (GlcNAc...) asparagine) is linked at asparagine 122.

It belongs to the alpha-type phospholipase A2 inhibitor family. In terms of assembly, homotrimer; non-covalently linked. Expressed by the liver.

It localises to the secreted. This phospholipase A2 inhibitor binds directly phospholipase A2 in the presence or absence of calcium. This chain is Phospholipase A2 inhibitor B1, found in Crotalus durissus terrificus (South American rattlesnake).